The primary structure comprises 188 residues: NADH-quinone oxidoreductase subunit I (188 aa).

4Fe-4S ferredoxin-type domains follow at residues 44–74 (LNRYADGLEKCIGCELCAWACPADAIYVEGA) and 90–119 (QVYQINYLRCIGCGLCIEACPTRALTMTNE). Residues C54, C57, C60, C64, C99, C102, C105, and C109 each coordinate [4Fe-4S] cluster. The interval 167 to 188 (TGGAAAAAQDESEVDDTAGDRP) is disordered. The segment covering 176–188 (DESEVDDTAGDRP) has biased composition (acidic residues).

The protein belongs to the complex I 23 kDa subunit family. As to quaternary structure, NDH-1 is composed of 14 different subunits. Subunits NuoA, H, J, K, L, M, N constitute the membrane sector of the complex. [4Fe-4S] cluster serves as cofactor.

It is found in the cell membrane. It catalyses the reaction a quinone + NADH + 5 H(+)(in) = a quinol + NAD(+) + 4 H(+)(out). Its function is as follows. NDH-1 shuttles electrons from NADH, via FMN and iron-sulfur (Fe-S) centers, to quinones in the respiratory chain. The immediate electron acceptor for the enzyme in this species is believed to be ubiquinone. Couples the redox reaction to proton translocation (for every two electrons transferred, four hydrogen ions are translocated across the cytoplasmic membrane), and thus conserves the redox energy in a proton gradient. The protein is NADH-quinone oxidoreductase subunit I of Rhodococcus jostii (strain RHA1).